Reading from the N-terminus, the 354-residue chain is UDP-N-acetylglucosamine--N-acetylmuramyl-(pentapeptide) pyrophosphoryl-undecaprenol N-acetylglucosamine transferase (354 aa).

UDP-N-acetyl-alpha-D-glucosamine-binding positions include 13 to 15, Asn125, Arg161, Ser189, Ile242, 261 to 266, and Gln286; these read SGG and ALTVSE.

It belongs to the glycosyltransferase 28 family. MurG subfamily.

The protein localises to the cell inner membrane. The enzyme catalyses di-trans,octa-cis-undecaprenyl diphospho-N-acetyl-alpha-D-muramoyl-L-alanyl-D-glutamyl-meso-2,6-diaminopimeloyl-D-alanyl-D-alanine + UDP-N-acetyl-alpha-D-glucosamine = di-trans,octa-cis-undecaprenyl diphospho-[N-acetyl-alpha-D-glucosaminyl-(1-&gt;4)]-N-acetyl-alpha-D-muramoyl-L-alanyl-D-glutamyl-meso-2,6-diaminopimeloyl-D-alanyl-D-alanine + UDP + H(+). It participates in cell wall biogenesis; peptidoglycan biosynthesis. Functionally, cell wall formation. Catalyzes the transfer of a GlcNAc subunit on undecaprenyl-pyrophosphoryl-MurNAc-pentapeptide (lipid intermediate I) to form undecaprenyl-pyrophosphoryl-MurNAc-(pentapeptide)GlcNAc (lipid intermediate II). In Buchnera aphidicola subsp. Schizaphis graminum (strain Sg), this protein is UDP-N-acetylglucosamine--N-acetylmuramyl-(pentapeptide) pyrophosphoryl-undecaprenol N-acetylglucosamine transferase.